The sequence spans 272 residues: 4-hydroxy-tetrahydrodipicolinate reductase (272 aa).

Residues 11 to 16 and glutamate 37 contribute to the NAD(+) site; that span reads GVSGRM. Residue arginine 38 coordinates NADP(+). NAD(+) contacts are provided by residues 101–103 and 125–128; these read GTT and AGNM. The active-site Proton donor/acceptor is histidine 158. Histidine 159 contacts (S)-2,3,4,5-tetrahydrodipicolinate. Lysine 162 (proton donor) is an active-site residue. 168–169 is a (S)-2,3,4,5-tetrahydrodipicolinate binding site; the sequence is GT.

Belongs to the DapB family.

It localises to the cytoplasm. The catalysed reaction is (S)-2,3,4,5-tetrahydrodipicolinate + NAD(+) + H2O = (2S,4S)-4-hydroxy-2,3,4,5-tetrahydrodipicolinate + NADH + H(+). It catalyses the reaction (S)-2,3,4,5-tetrahydrodipicolinate + NADP(+) + H2O = (2S,4S)-4-hydroxy-2,3,4,5-tetrahydrodipicolinate + NADPH + H(+). Its pathway is amino-acid biosynthesis; L-lysine biosynthesis via DAP pathway; (S)-tetrahydrodipicolinate from L-aspartate: step 4/4. In terms of biological role, catalyzes the conversion of 4-hydroxy-tetrahydrodipicolinate (HTPA) to tetrahydrodipicolinate. The chain is 4-hydroxy-tetrahydrodipicolinate reductase from Roseobacter denitrificans (strain ATCC 33942 / OCh 114) (Erythrobacter sp. (strain OCh 114)).